The chain runs to 804 residues: Ral guanine nucleotide dissociation stimulator-like 1 (804 aa).

Residues K101–R231 form the N-terminal Ras-GEF domain. Residues E270–L539 form the Ras-GEF domain. 2 disordered regions span residues N564 to H611 and S640 to P676. Low complexity-rich tracts occupy residues P581–M607 and S640–T649. The span at I661–S671 shows a compositional bias: polar residues. In terms of domain architecture, Ras-associating spans D684–S771.

Functionally, probable guanine nucleotide exchange factor. The polypeptide is Ral guanine nucleotide dissociation stimulator-like 1 (rgl1) (Danio rerio (Zebrafish)).